The chain runs to 1178 residues: Integrin alpha-2 (1178 aa).

The first 26 residues, 1–26 (MGPGQAGGALLLRLLMLVQGILNCLA), serve as a signal peptide directing secretion. Over 27 to 1129 (YNVGLPGAKI…KPTEKAEVPT (1103 aa)) the chain is Extracellular. FG-GAP repeat units lie at residues 31–89 (LPGA…TATC) and 98–158 (ASIS…FLTS). Cysteine 80 and cysteine 89 are disulfide-bonded. Residues asparagine 102 and asparagine 109 are each glycosylated (N-linked (GlcNAc...) asparagine). The region spanning 185–362 (WEAVKNFLVK…TLGEQIFSIE (178 aa)) is the VWFA domain. FG-GAP repeat units follow at residues 363 to 417 (GTVQ…VIFP), 420 to 472 (AFDQ…KQGN), 474 to 536 (TVIQ…ILNQ), 537 to 595 (HQFL…TIRT), and 601 to 661 (ILGS…FTPD). Asparagine 429, asparagine 457, and asparagine 472 each carry an N-linked (GlcNAc...) asparagine glycan. The Cell attachment site signature appears at 480–482 (RGD). Ca(2+)-binding residues include aspartate 496, aspartate 498, aspartate 500, aspartate 504, aspartate 560, asparagine 562, aspartate 564, aspartate 568, aspartate 624, asparagine 626, aspartate 628, and aspartate 632. 5 disulfide bridges follow: cysteine 677/cysteine 734, cysteine 786/cysteine 792, cysteine 862/cysteine 873, cysteine 1016/cysteine 1047, and cysteine 1052/cysteine 1057. A glycan (N-linked (GlcNAc...) asparagine) is linked at asparagine 696. 3 N-linked (GlcNAc...) asparagine glycosylation sites follow: asparagine 1054, asparagine 1071, and asparagine 1078. A helical transmembrane segment spans residues 1130–1151 (GVIIGSIIAGILLLLAMTAGLW). The Cytoplasmic segment spans residues 1152 to 1178 (KLGFFKRQYKKMGQNPDEMDETTELNS). Residues 1154–1158 (GFFKR) carry the GFFKR motif motif.

This sequence belongs to the integrin alpha chain family. In terms of assembly, heterodimer of an alpha and a beta subunit. Alpha-2 associates with beta-1. Interacts with HPS5 and RAB21.

The protein resides in the membrane. Integrin alpha-2/beta-1 is a collagen receptor, being responsible for adhesion of platelets and other cells to collagens, modulation of collagen and collagenase gene expression, force generation and organization of newly synthesized extracellular matrix. It is also a receptor for laminins, collagen C-propeptides and E-cadherin. Mice homozygous for a null mutation in the alpha-2 die very early in embryogenesis. In Mus musculus (Mouse), this protein is Integrin alpha-2 (Itga2).